The following is a 284-amino-acid chain: Bifunctional protein FolD (284 aa).

Residues 165-167, Ser190, and Val231 contribute to the NADP(+) site; that span reads GRS.

The protein belongs to the tetrahydrofolate dehydrogenase/cyclohydrolase family. Homodimer.

The catalysed reaction is (6R)-5,10-methylene-5,6,7,8-tetrahydrofolate + NADP(+) = (6R)-5,10-methenyltetrahydrofolate + NADPH. It catalyses the reaction (6R)-5,10-methenyltetrahydrofolate + H2O = (6R)-10-formyltetrahydrofolate + H(+). It participates in one-carbon metabolism; tetrahydrofolate interconversion. In terms of biological role, catalyzes the oxidation of 5,10-methylenetetrahydrofolate to 5,10-methenyltetrahydrofolate and then the hydrolysis of 5,10-methenyltetrahydrofolate to 10-formyltetrahydrofolate. This chain is Bifunctional protein FolD, found in Natranaerobius thermophilus (strain ATCC BAA-1301 / DSM 18059 / JW/NM-WN-LF).